Consider the following 639-residue polypeptide: UvrABC system protein C (639 aa).

In terms of domain architecture, GIY-YIG spans 31–109 (EQAGVYRMYD…IKKYQPKYNI (79 aa)). A UVR domain is found at 218-253 (SAVIEQLVARMELASNELHFELAAKYRDQIVTLRKV).

Belongs to the UvrC family. In terms of assembly, interacts with UvrB in an incision complex.

Its subcellular location is the cytoplasm. The UvrABC repair system catalyzes the recognition and processing of DNA lesions. UvrC both incises the 5' and 3' sides of the lesion. The N-terminal half is responsible for the 3' incision and the C-terminal half is responsible for the 5' incision. This Colwellia psychrerythraea (strain 34H / ATCC BAA-681) (Vibrio psychroerythus) protein is UvrABC system protein C.